Reading from the N-terminus, the 324-residue chain is Ribose-phosphate pyrophosphokinase 1 (324 aa).

ATP-binding positions include 39–41 and 98–99; these read DGE and RQ. The Mg(2+) site is built by H132 and D174. Residue K197 is part of the active site. D-ribose 5-phosphate is bound by residues R199, D223, and 227 to 231; that span reads DTAGT.

The protein belongs to the ribose-phosphate pyrophosphokinase family. Class I subfamily. Homohexamer. It depends on Mg(2+) as a cofactor.

It localises to the cytoplasm. The enzyme catalyses D-ribose 5-phosphate + ATP = 5-phospho-alpha-D-ribose 1-diphosphate + AMP + H(+). It participates in metabolic intermediate biosynthesis; 5-phospho-alpha-D-ribose 1-diphosphate biosynthesis; 5-phospho-alpha-D-ribose 1-diphosphate from D-ribose 5-phosphate (route I): step 1/1. Its function is as follows. Involved in the biosynthesis of the central metabolite phospho-alpha-D-ribosyl-1-pyrophosphate (PRPP) via the transfer of pyrophosphoryl group from ATP to 1-hydroxyl of ribose-5-phosphate (Rib-5-P). The protein is Ribose-phosphate pyrophosphokinase 1 of Lactococcus lactis subsp. lactis (strain IL1403) (Streptococcus lactis).